The sequence spans 716 residues: MQDDLLMDKSKTQPQSQQQQRQQQQQQQQLQPEPGAAEAPSTPLSSEIPKPEDSSAVPALSPASAPPAPNGPDKMQMESPLLPGLSFHQPPQQPPPPQEPTAPGASLSPSFGSTWSTGTTNAVEDSFFQGITPVNGTMLFQNFPHHVNPVFGGTFSPQIGLAQTQHHQQPPPPAPQPPQPAQPPQAQPSQQRRSPASPSQAPYAQRSAAAYGHQPIMTSKPSSSSAVAAAAAAAAASSASSSWNTHQSVNAAWSAPSNPWGGLQAGRDPRRAVGVGVGVGVGVPSPLNPISPLKKPFSSNVIAPPKFPRAAPLTSKSWMEDNAFRTDNGNNLLPFQDRSRPYDTFNLHSLENSLMDMIRTDHEPLKGKHYPNSGPPMSFADIMWRNHFAGRMGINFHHPGTDNIMALNTRSYGRRRGRSSLFPFEDAFLDDSHGDQALSSGLSSPTRCQNGERVERYSRKVFVGGLPPDIDEDEITASFRRFGPLVVDWPHKAESKSYFPPKGYAFLLFQEESSVQALIDACLEEDGKLYLCVSSPTIKDKPVQIRPWNLSDSDFVMDGSQPLDPRKTIFVGGVPRPLRAVELAMIMDRLYGGVCYAGIDTDPELKYPKGAGRVAFSNQQSYIAAISARFVQLQHNDIDKRVEVKPYVLDDQMCDECQGTRCGGKFAPFFCANVTCLQYYCEYCWASIHSRAGREFHKPLVKEGGDRPRHVPFRWS.

Basic and acidic residues predominate over residues 1–11 (MQDDLLMDKSK). Disordered stretches follow at residues 1 to 118 (MQDD…WSTG) and 162 to 209 (AQTQ…RSAA). Low complexity-rich tracts occupy residues 13–31 (QPQS…QQLQ) and 54–63 (SSAVPALSPA). Over residues 91–100 (PQQPPPPQEP) the composition is skewed to pro residues. Residues 107–118 (LSPSFGSTWSTG) are compositionally biased toward polar residues. Positions 169–186 (QPPPPAPQPPQPAQPPQA) are enriched in pro residues. Over residues 187–209 (QPSQQRRSPASPSQAPYAQRSAA) the composition is skewed to low complexity. S194, S197, and S291 each carry phosphoserine. An Asymmetric dimethylarginine modification is found at R309. S419 and S420 each carry phosphoserine. RRM domains are found at residues 459–550 (RKVF…PWNL) and 567–649 (KTIF…PYVL).

Belongs to the RRM CPEB family. Following synaptic activity, aggregates to form amyloid-like oligomers. Aggregation requires an intact actin cytoskeleton. Interacts with STAT5B; this inhibits STAT5B-mediated transcriptional activation. Interacts with E3 ubiquitin-protein ligase NEURL1; this leads to monoubiquitination and activation of CPEB3. Interacts with CAPN2; this leads to cleavage of CPEB3. Interacts (via C-terminal RNA-binding region) with TOB1; TOB1 also binds CNOT7/CAF1 and recruits it to CPEB3 to form a ternary complex. Interacts with SUMO-conjugating enzyme UBC9. Interacts with IPO5; the interaction is enhanced in a RAN-regulated manner following neuronal stimulation and mediates CPEB3 nuclear import. Interacts with exportin XPO1/CRM1. Activated by NEURL1-mediated monoubiquitination, resulting in the growth of new dendritic spines and increased levels of GRIA1 and GRIA2. NEURL1-mediated monoubiquitination facilitates synaptic plasticity and hippocampal-dependent memory storage. Post-translationally, under basal unstimulated conditions when CPEB3 is mainly unaggregated, sumoylated and acts as a translational repressor. Following neuronal stimulation, becomes desumoylated and aggregated which is required for the translation of mRNA targets and for dendritic filopodia formation. In terms of processing, following neuronal stimulation, cleaved by CAPN2 which abolishes its translational repressor activity, leading to translation of CPEB3 target mRNAs. Phosphorylation is enhanced by neuronal stimulation. Highly expressed in brain (at protein level). In brain, expressed in the hippocampus, granule cells and interneurons of the cerebellum, and mitral cells of the olfactory bulb (at protein level). Detected in the spinal cord and in peripheral dorsal root ganglia (at protein level). In the retina, strongly expressed in the retinal ganglion layer and, to a lesser extent, in the inner margin of the inner nuclear layer with expression also detected in the inner and outer plexiform layers (at protein level). Highly expressed in brain and heart, less in liver, kidney, embryo, skeletal muscle, lung and ovary. Weakly expressed in granular cells of dentate gyrus and the pyramidal cells of CA3 and CA1 of the hippocampus.

The protein localises to the cytoplasm. It localises to the nucleus. Its subcellular location is the synapse. It is found in the cell projection. The protein resides in the dendrite. The protein localises to the postsynaptic density. Sequence-specific RNA-binding protein which acts as a translational repressor in the basal unstimulated state but, following neuronal stimulation, acts as a translational activator. In contrast to CPEB1, does not bind to the cytoplasmic polyadenylation element (CPE), a uridine-rich sequence element within the mRNA 3'-UTR, but binds to a U-rich loop within a stem-loop structure. Required for the consolidation and maintenance of hippocampal-based long term memory. In the basal state, binds to the mRNA 3'-UTR of the glutamate receptors GRIA1 and GRIA2 and negatively regulates their translation. Also represses the translation of DLG4, GRIN1 GRIN2A and GRIN2B. When activated, acts as a translational activator of GRIA1 and GRIA2. In the basal state, suppresses SUMO2 translation but activates it following neuronal stimulation. Binds to the 3'-UTR of TRPV1 mRNA and represses TRPV1 translation which is required to maintain normal thermoception. Binds actin mRNA, leading to actin translational repression in the basal state and to translational activation following neuronal stimulation. Negatively regulates target mRNA levels by binding to TOB1 which recruits CNOT7/CAF1 to a ternary complex and this leads to target mRNA deadenylation and decay. In addition to its role in translation, binds to and inhibits the transcriptional activation activity of STAT5B without affecting its dimerization or DNA-binding activity. This, in turn, represses transcription of the STAT5B target gene EGFR which has been shown to play a role in enhancing learning and memory performance. In contrast to CPEB1, CPEB2 and CPEB4, not required for cell cycle progression. The sequence is that of Cytoplasmic polyadenylation element-binding protein 3 (Cpeb3) from Mus musculus (Mouse).